Here is a 143-residue protein sequence, read N- to C-terminus: D-aminoacyl-tRNA deacylase (143 aa).

A Gly-cisPro motif, important for rejection of L-amino acids motif is present at residues 135-136 (GP).

This sequence belongs to the DTD family. As to quaternary structure, homodimer.

The protein localises to the cytoplasm. The catalysed reaction is glycyl-tRNA(Ala) + H2O = tRNA(Ala) + glycine + H(+). The enzyme catalyses a D-aminoacyl-tRNA + H2O = a tRNA + a D-alpha-amino acid + H(+). Functionally, an aminoacyl-tRNA editing enzyme that deacylates mischarged D-aminoacyl-tRNAs. Also deacylates mischarged glycyl-tRNA(Ala), protecting cells against glycine mischarging by AlaRS. Acts via tRNA-based rather than protein-based catalysis; rejects L-amino acids rather than detecting D-amino acids in the active site. By recycling D-aminoacyl-tRNA to D-amino acids and free tRNA molecules, this enzyme counteracts the toxicity associated with the formation of D-aminoacyl-tRNA entities in vivo and helps enforce protein L-homochirality. The polypeptide is D-aminoacyl-tRNA deacylase (Nocardia farcinica (strain IFM 10152)).